Here is a 205-residue protein sequence, read N- to C-terminus: 3-demethoxyubiquinol 3-hydroxylase (205 aa).

Fe cation is bound by residues Glu-54, Glu-84, His-87, Glu-136, Glu-168, and His-171.

The protein belongs to the COQ7 family. Requires Fe cation as cofactor.

It localises to the cell membrane. It carries out the reaction a 5-methoxy-2-methyl-3-(all-trans-polyprenyl)benzene-1,4-diol + AH2 + O2 = a 3-demethylubiquinol + A + H2O. The protein operates within cofactor biosynthesis; ubiquinone biosynthesis. Its function is as follows. Catalyzes the hydroxylation of 2-nonaprenyl-3-methyl-6-methoxy-1,4-benzoquinol during ubiquinone biosynthesis. The sequence is that of 3-demethoxyubiquinol 3-hydroxylase from Acidovorax sp. (strain JS42).